Consider the following 122-residue polypeptide: Large ribosomal subunit protein uL14 (122 aa).

The protein belongs to the universal ribosomal protein uL14 family. In terms of assembly, part of the 50S ribosomal subunit. Forms a cluster with proteins L3 and L19. In the 70S ribosome, L14 and L19 interact and together make contacts with the 16S rRNA in bridges B5 and B8.

Functionally, binds to 23S rRNA. Forms part of two intersubunit bridges in the 70S ribosome. This Campylobacter jejuni subsp. jejuni serotype O:6 (strain 81116 / NCTC 11828) protein is Large ribosomal subunit protein uL14.